The chain runs to 336 residues: Probable magnesium transporter NIPA2 (336 aa).

The Extracellular segment spans residues 1–7 (MEEMSPD). A helical transmembrane segment spans residues 8-28 (NIHGVILAVSSSIFIGSSFII). Topologically, residues 29 to 55 (KKKGLKKAGVSGARAGEGGYGYLYEPW) are cytoplasmic. The chain crosses the membrane as a helical span at residues 56–76 (WWAGMITMIVGEIANFAAYAF). The Extracellular portion of the chain corresponds to 77–79 (APA). The helical transmembrane segment at 80 to 100 (ILVTPLGALSIIFSAVLAHFI) threads the bilayer. The Cytoplasmic portion of the chain corresponds to 101–104 (LEEK). The helical transmembrane segment at 105-125 (LHMFGILGCVLCVVGSTTIVL) threads the bilayer. The Extracellular segment spans residues 126–145 (HAPHEQGIESVKQVWHLATE). The chain crosses the membrane as a helical span at residues 146–166 (PGFLAYSAVVLVVVLALIFYY). Residues 167–179 (EPRYGKTHMIVYV) are Cytoplasmic-facing. Residues 180 to 200 (GICSLMGSLTVMSVKAVAIAI) traverse the membrane as a helical segment. The Extracellular portion of the chain corresponds to 201 to 212 (KLTFSGMNQFKY). Residues 213-233 (FHAWIFIIVVTICCILQINYL) form a helical membrane-spanning segment. The Cytoplasmic segment spans residues 234-244 (NKALDNFNTAV). The helical transmembrane segment at 245-265 (ISPVYYVMFTTFTILASMIMF) threads the bilayer. Topologically, residues 266 to 272 (KDWASQS) are extracellular. The chain crosses the membrane as a helical span at residues 273–293 (GLQIATELCGFVTILSGTFLL). At 294-336 (HKTKDMGNSTSLRGSTSHSPRDTPVFINSGSSRSSNSTRPAIL) the chain is on the cytoplasmic side. The disordered stretch occupies residues 303 to 336 (TSLRGSTSHSPRDTPVFINSGSSRSSNSTRPAIL). Over residues 321 to 330 (NSGSSRSSNS) the composition is skewed to low complexity.

It belongs to the NIPA (TC 2.A.7) family. In terms of assembly, homodimer.

It is found in the cell membrane. The protein localises to the early endosome. In terms of biological role, acts as a Mg(2+) transporter. Can also transport other divalent cations such as Fe(2+), Sr(2+), Ba(2+), Mn(2+) and Co(2+) but to a much less extent than Mg(2+). This chain is Probable magnesium transporter NIPA2, found in Arabidopsis thaliana (Mouse-ear cress).